The sequence spans 1538 residues: Phenolphthiocerol/phthiocerol polyketide synthase subunit B (1538 aa).

Positions 33 to 455 (AEPVAVVGIG…GTNAHVIIEQ (423 aa)) constitute a Ketosynthase family 3 (KS3) domain. Active-site for beta-ketoacyl synthase activity residues include cysteine 205, histidine 340, and histidine 377. The segment at 553–882 (DGSPGPGTVF…TNLYTADIAH (330 aa)) is acyltransferase. Serine 649 serves as the catalytic For malonyltransferase activity. Residue 1153 to 1196 (SQLVIGATGNIGPHLIRQLARMGAKTIVAMARKPGALDELTQCL) coordinates NADP(+). Positions 1153-1328 (SQLVIGATGN…TVVDWGLWKS (176 aa)) are beta-ketoacyl reductase. One can recognise a Carrier domain in the interval 1423-1498 (DMLFDHVGAL…SLTDYLATVL (76 aa)). Serine 1458 carries the O-(pantetheine 4'-phosphoryl)serine modification.

The cofactor is NADP(+). Pantetheine 4'-phosphate serves as cofactor.

The catalysed reaction is icosanoyl-[(phenol)carboxyphthiodiolenone synthase] + 2 (S)-methylmalonyl-CoA + 3 malonyl-CoA + 5 NADPH + 10 H(+) = C32-carboxyphthiodiolenone-[(phenol)carboxyphthiodiolenone synthase] + 5 CO2 + 5 NADP(+) + 5 CoA + 2 H2O. It catalyses the reaction docosanoyl-[(phenol)carboxyphthiodiolenone synthase] + 2 (S)-methylmalonyl-CoA + 3 malonyl-CoA + 5 NADPH + 10 H(+) = C34-carboxyphthiodiolenone-[(phenol)carboxyphthiodiolenone synthase] + 5 CO2 + 5 NADP(+) + 5 CoA + 2 H2O. The enzyme catalyses 17-(4-hydroxyphenyl)heptadecanoyl-[(phenol)carboxyphthiodiolenone synthase] + 2 (S)-methylmalonyl-CoA + 3 malonyl-CoA + 5 NADPH + 10 H(+) = C35-(phenol)carboxyphthiodiolenone-[(phenol)carboxyphthiodiolenone synthase] + 5 CO2 + 5 NADP(+) + 5 CoA + 2 H2O. It carries out the reaction 19-(4-hydroxyphenyl)nonadecanoyl-[(phenol)carboxyphthiodiolenone synthase] + 2 (S)-methylmalonyl-CoA + 3 malonyl-CoA + 5 NADPH + 10 H(+) = C37-(phenol)carboxyphthiodiolenone-[(phenol)carboxyphthiodiolenone synthase] + 5 CO2 + 5 NADP(+) + 5 CoA + 2 H2O. It participates in lipid metabolism; fatty acid biosynthesis. In terms of biological role, part of the PpsABCDE complex involved in the biosynthesis of the lipid core common to phthiocerols and phenolphthiocerols by successive additions of malonyl-CoA or methylmalonyl-CoA extender units. PpsA can accept as substrate the activated forms of either icosanoyl (C20), docosanoyl (C22) or lignoceroyl (C24) groups from FadD26, or a (4-hydroxyphenyl)-C17 or (4-hydroxyphenyl)-C19 fatty acyl from FadD29. PpsA initiates the biosynthesis and extends its substrate using a malonyl-CoA extender unit. The PpsB and PpsC proteins add the second and third malonyl-CoA extender units. PpsD adds an (R)-methylmalonyl unit and PpsE adds a second (R)-methylmalonyl unit. The incorporation of the methylmalonyl units results in formation of two branched methyl groups in the elongated product. The sequence is that of Phenolphthiocerol/phthiocerol polyketide synthase subunit B (ppsB) from Mycobacterium tuberculosis (strain CDC 1551 / Oshkosh).